We begin with the raw amino-acid sequence, 291 residues long: ATP synthase gamma chain (291 aa).

It belongs to the ATPase gamma chain family. In terms of assembly, F-type ATPases have 2 components, CF(1) - the catalytic core - and CF(0) - the membrane proton channel. CF(1) has five subunits: alpha(3), beta(3), gamma(1), delta(1), epsilon(1). CF(0) has three main subunits: a, b and c.

Its subcellular location is the cell inner membrane. Produces ATP from ADP in the presence of a proton gradient across the membrane. The gamma chain is believed to be important in regulating ATPase activity and the flow of protons through the CF(0) complex. This is ATP synthase gamma chain from Sulfurihydrogenibium sp. (strain YO3AOP1).